A 167-amino-acid polypeptide reads, in one-letter code: Novel acetylcholine receptor chaperone (167 aa).

Residues 1 to 5 (MASPR) lie on the Cytoplasmic side of the membrane. Residues 6 to 26 (TVTIVALSVALGLFFVFMGTI) traverse the membrane as a helical segment. At 27-61 (KLTPRLSKDAYSEMKRAYKSYVRALPLLKKMGINS) the chain is on the lumenal side. The segment at 43–54 (AYKSYVRALPLL) is interaction with NGFR. The chain crosses the membrane as a helical span at residues 62 to 82 (ILLRKSIGALEVACGIVMTLV). The Cytoplasmic segment spans residues 83–88 (PGRPKD). A helical membrane pass occupies residues 89–109 (VANFFLLLLVLAVLFFHQLVG). Topologically, residues 110–114 (DPLKR) are lumenal. Residues 115–132 (YAHALVFGILLTCRLLIA) form a helical membrane-spanning segment. Topologically, residues 133–167 (RKPEDRSSEKKPLPGNAEEQPSLYEKAPQGKVKVS) are cytoplasmic. Residues 136-167 (EDRSSEKKPLPGNAEEQPSLYEKAPQGKVKVS) form a disordered region.

This sequence belongs to the DoxX family. May interact with NGFR. Interacts with RPN1, RPN2 and CANX.

Its subcellular location is the peroxisome membrane. It localises to the cytoplasmic vesicle. The protein localises to the endoplasmic reticulum membrane. Molecular chaperone which mediates the proper assembly and functional expression of the nicotinic acetylcholine receptors (nAChRs) throughout the brain. Essential for the proper folding, assembly, function and surface trafficking of alpha-7 (CHRNA7), alpha-4-beta-2, alpha-3-beta-2 and alpha-3-beta-4 receptors. Stably associates with ribophorin-1 (RPN1) and ribophorin-2 (RPN2) (components of the oligosaccharyl transferase (OST) complex) and with calnexin (CANX), both of which are critical for NACHO-mediated effects on CHRNA7 assembly and function. Facilitates the proper folding and assembly of alpha-6-beta-2 and alpha-6-beta-2-beta-3 receptors and acts at early stages of the nAChRs subunit assembly. Promotes the expression of the alpha-4(2):beta-2(3) stoichiometric form over the alpha-4(3):beta-2(2) form. The sequence is that of Novel acetylcholine receptor chaperone (TMEM35A) from Macaca fascicularis (Crab-eating macaque).